Here is a 270-residue protein sequence, read N- to C-terminus: Protein MGF 110-1L (270 aa).

Positions 1 to 26 are cleaved as a signal peptide; it reads MLGLQIFTLLSIPTLLYTYEIEPLER. Topologically, residues 27-117 are extracellular; it reads TSTPPEKEFG…HERHEADIRK (91 aa). The stretch at 27 to 146 is one A repeat; that stretch reads TSTPPEKEFG…YIRKRSLQTV (120 aa). Asn75 carries N-linked (GlcNAc...) asparagine; by host glycosylation. A helical transmembrane segment spans residues 118-138; it reads WQKLLTYGFYLAGCILAVNYI. Residues 139-145 are Cytoplasmic-facing; sequence RKRSLQT. The chain crosses the membrane as a helical span at residues 146-166; that stretch reads VMYLLVFLVISFLLSQLMLYG. One copy of the B repeat lies at 147–270; that stretch reads MYLLVFLVIS…DNLMKKQDIM (124 aa). Over 167 to 270 the chain is Extracellular; the sequence is ELEDKKHKIG…DNLMKKQDIM (104 aa).

This sequence belongs to the asfivirus MGF 110 family.

It is found in the membrane. In terms of biological role, plays a role in virus cell tropism, and may be required for efficient virus replication in macrophages. The sequence is that of Protein MGF 110-1L from African swine fever virus (isolate Pig/Portugal/OURT88/1988) (ASFV).